A 657-amino-acid chain; its full sequence is N-acetylgalactosaminyltransferase 7 (657 aa).

Over 1–6 (MRLKIG) the chain is Cytoplasmic. A helical; Signal-anchor for type II membrane protein membrane pass occupies residues 7 to 29 (FILRSLLVVGSFLGLVVLWSSLT). The Lumenal segment spans residues 30 to 657 (PRPDDPSPLS…KWEMNNIHSV (628 aa)). The interval 31–66 (RPDDPSPLSRMREDRDVNDPMPNRGGNGLAPGEDRF) is disordered. Disulfide bonds link C197-C435, C426-C507, C545-C562, C585-C600, and C625-C640. The segment at 206–317 (LLTSSVVIVF…VNWYAPLVAP (112 aa)) is catalytic subdomain A. Residues D247 and R277 each contribute to the substrate site. Mn(2+)-binding residues include D301 and H303. Residues 381–443 (PYRSPAMAGG…PCSRVGHIYR (63 aa)) form a catalytic subdomain B region. Residue W412 coordinates substrate. H440 contacts Mn(2+). Residue R443 participates in substrate binding. A Ricin B-type lectin domain is found at 532–652 (VDWGEIRGFE…SKTTQKWEMN (121 aa)).

The protein belongs to the glycosyltransferase 2 family. GalNAc-T subfamily. Requires Mn(2+) as cofactor.

It localises to the golgi apparatus membrane. The enzyme catalyses L-seryl-[protein] + UDP-N-acetyl-alpha-D-galactosamine = a 3-O-[N-acetyl-alpha-D-galactosaminyl]-L-seryl-[protein] + UDP + H(+). The catalysed reaction is L-threonyl-[protein] + UDP-N-acetyl-alpha-D-galactosamine = a 3-O-[N-acetyl-alpha-D-galactosaminyl]-L-threonyl-[protein] + UDP + H(+). It functions in the pathway protein modification; protein glycosylation. In terms of biological role, glycopeptide transferase involved in O-linked oligosaccharide biosynthesis, which catalyzes the transfer of an N-acetyl-D-galactosamine residue to an already glycosylated peptide. In contrast to other proteins of the family, it does not act as a peptide transferase that transfers GalNAc onto serine or threonine residue on the protein receptor, but instead requires the prior addition of a GalNAc on a peptide before adding additional GalNAc moieties. Some peptide transferase activity is however not excluded, considering that its appropriate peptide substrate may remain unidentified. The chain is N-acetylgalactosaminyltransferase 7 (GALNT7) from Pongo abelii (Sumatran orangutan).